A 106-amino-acid chain; its full sequence is MSSHPTKITFFEFLTPLITAGKKTITIRDESESHYVPNTEVEVFTLETDRKVCDIKILSVAPLKFDDINEFHAEQEAIELPKLKELIREIYPNINELYVIEYELIK.

Residues 9-105 (TFFEFLTPLI…ELYVIEYELI (97 aa)) enclose the ASCH domain. Residue Lys-23 is the Proton acceptor of the active site. Thr-26 serves as the catalytic Nucleophile. Glu-76 acts as the Proton donor in catalysis.

This sequence belongs to the N(4)-acetylcytidine amidohydrolase family.

The catalysed reaction is N(4)-acetylcytidine + H2O = cytidine + acetate + H(+). It carries out the reaction N(4)-acetyl-2'-deoxycytidine + H2O = 2'-deoxycytidine + acetate + H(+). It catalyses the reaction N(4)-acetylcytosine + H2O = cytosine + acetate + H(+). Catalyzes the hydrolysis of N(4)-acetylcytidine (ac4C). The protein is N(4)-acetylcytidine amidohydrolase of Vibrio campbellii (strain ATCC BAA-1116).